The chain runs to 585 residues: Packaging protein UL32 (585 aa).

A disordered region spans residues 1–25 (MDRVESEEPMDGFESPVFSENTSSN). 8 residues coordinate Zn(2+): cysteine 107, cysteine 110, histidine 187, cysteine 193, cysteine 408, cysteine 411, histidine 484, and cysteine 491. Zinc finger regions lie at residues 107–193 (CLVC…LHVC) and 408–491 (CMLC…DLLC).

This sequence belongs to the herpesviridae UL32 protein family.

The protein localises to the host cytoplasm. The protein resides in the host nucleus. In terms of biological role, plays a role in efficient localization of neo-synthesized capsids to nuclear replication compartments, thereby controlling cleavage and packaging of virus genomic DNA. The chain is Packaging protein UL32 (26) from Varicella-zoster virus (strain Dumas) (HHV-3).